The sequence spans 250 residues: Superoxide dismutase 1 copper chaperone (250 aa).

Residues 4–67 (SFEIVFAVPM…AIQSTGKDAI (64 aa)) form the HMA domain. The Cu cation site is built by C15, C18, C229, and C231.

The protein belongs to the CCS1 family. Requires Cu(2+) as cofactor.

Its subcellular location is the cytoplasm. Copper chaperone for superoxide dismutase 1 (SOD1). Binds copper ions and delivers them specifically to SOD1. The chain is Superoxide dismutase 1 copper chaperone (CCS1) from Debaryomyces hansenii (strain ATCC 36239 / CBS 767 / BCRC 21394 / JCM 1990 / NBRC 0083 / IGC 2968) (Yeast).